We begin with the raw amino-acid sequence, 584 residues long: Interferon regulatory factor 2-binding protein 1 (584 aa).

The tract at residues 59–120 is disordered; sequence HVLPEGRSPG…RYDRATSSSR (62 aa). S66 carries the post-translational modification Phosphoserine. Residues 82–100 show a composition bias toward low complexity; that stretch reads STGSQGSQLPPPQAQAQPS. S125 carries the phosphoserine modification. The residue at position 177 (R177) is an Omega-N-methylarginine. A Phosphoserine modification is found at S186. Residues 197-217 adopt a coiled-coil conformation; that stretch reads EKEKQQRNADCLAELNEAMRG. A Glycyl lysine isopeptide (Lys-Gly) (interchain with G-Cter in SUMO2) cross-link involves residue K227. Disordered regions lie at residues 346-421 and 433-495; these read PAEA…GVPS and LGHS…GTGA. The segment covering 354 to 369 has biased composition (pro residues); that stretch reads YPEPAPAALCGPPPRA. 4 positions are modified to phosphoserine: S371, S384, S421, and S436. K438 is covalently cross-linked (Glycyl lysine isopeptide (Lys-Gly) (interchain with G-Cter in SUMO2)). The span at 449–458 shows a compositional bias: low complexity; sequence AGGASPAASS. S453 and S457 each carry phosphoserine. The RING-type; degenerate zinc-finger motif lies at 503 to 550; the sequence is CTLCRERLEDTHFVQCPSVPGHKFCFPCSREFIKAQGPAGEVYCPSGD. Residues 503–550 form a cys-rich region; sequence CTLCRERLEDTHFVQCPSVPGHKFCFPCSREFIKAQGPAGEVYCPSGD.

It belongs to the IRF2BP family. As to quaternary structure, interacts with IRF2. Part of a corepressor complex containing IRF2 and IRF2BP2. Interacts with JDP2.

Its subcellular location is the nucleus. The catalysed reaction is S-ubiquitinyl-[E2 ubiquitin-conjugating enzyme]-L-cysteine + [acceptor protein]-L-lysine = [E2 ubiquitin-conjugating enzyme]-L-cysteine + N(6)-ubiquitinyl-[acceptor protein]-L-lysine.. Acts as a transcriptional corepressor in a IRF2-dependent manner; this repression is not mediated by histone deacetylase activities. May act as an E3 ligase towards JDP2, enhancing its polyubiquitination. Represses ATF2-dependent transcriptional activation. The sequence is that of Interferon regulatory factor 2-binding protein 1 (Irf2bp1) from Mus musculus (Mouse).